The chain runs to 101 residues: UPF0235 protein MmarC7_0309 (101 aa).

The protein belongs to the UPF0235 family.

The chain is UPF0235 protein MmarC7_0309 from Methanococcus maripaludis (strain C7 / ATCC BAA-1331).